Reading from the N-terminus, the 344-residue chain is Bifunctional trans-3-hydroxy-L-proline dehydratase/2-epimerase (344 aa).

The active-site Proton acceptor is the Ser90. Residues 91 to 92 (GS), Asp252, and 257 to 258 (GT) contribute to the substrate site.

This sequence belongs to the proline racemase family.

The catalysed reaction is trans-3-hydroxy-L-proline = 1-pyrroline-2-carboxylate + H2O. It catalyses the reaction trans-3-hydroxy-L-proline = cis-3-hydroxy-D-proline. Its function is as follows. Bifunctional enzyme catalyzing both the dehydration of trans-3-hydroxy-L-proline (t3LHyp) to Delta(1)-pyrroline-2-carboxylate (Pyr2C) and 2-epimerization of t3LHyp to cis-3-hydroxy-D-proline (c3DHyp). No dehydratase activity with L-proline, trans-4-hydroxy-L-proline (t4LHyp), cis-4-hydroxy-L-proline (c4LHyp), D-proline, cis-4-hydroxy-D-proline (c4DHyp), trans-4-hydroxy-D-proline (t4DHyp) or L-serine as substrates. Displays neither t4LHyp epimerase nor proline racemase activity. Is likely involved in a degradation pathway that converts t3LHyp to L-proline, which would allow P.aeruginosa to grow on t3LHyp as a sole carbon source. In Pseudomonas aeruginosa (strain ATCC 15692 / DSM 22644 / CIP 104116 / JCM 14847 / LMG 12228 / 1C / PRS 101 / PAO1), this protein is Bifunctional trans-3-hydroxy-L-proline dehydratase/2-epimerase.